A 477-amino-acid chain; its full sequence is Calcium uptake protein 1, mitochondrial (477 aa).

Residues 1 to 33 constitute a mitochondrion transit peptide; sequence MFRLNTLSALAELAVGSRWYHGASQPTQTKRRL. A disordered region spans residues 57–107; sequence AESPPCVNSKKPDTEDKERNKDSGEVSSREGRAADAAAEPYPEDKKKKRSG. The segment covering 66-89 has biased composition (basic and acidic residues); it reads KKPDTEDKERNKDSGEVSSREGRA. The interval 101–112 is polybasic region; that stretch reads KKKKRSGFRDRK. A Phosphoserine; by PKB modification is found at Ser-124. The k/R-ring stretch occupies residues 128-131; that stretch reads KIFR. An EF-hand 1 domain is found at 220–255; that stretch reads TPQRNFEIAFKMFDLNGDGEVDMEEFEQVQSIIRSQ. Residues Asp-233, Asn-235, Asp-237, Glu-239, and Glu-244 each coordinate Ca(2+). Positions 261 to 265 are k/R-ring; that stretch reads RHRDR. Positions 356-376 constitute an EF-hand 2; degenerate domain; it reads KDGKGLTFQEVENFFTFLKNI. An EF-hand 3 domain is found at 410–445; that stretch reads LSDHVCDVVFALFDCDGNGELSNKEFVSIMKQRLMR. Ca(2+) is bound by residues Asp-423, Asp-425, Asn-427, Glu-429, and Glu-434. Arg-457 is subject to Asymmetric dimethylarginine. Residues 457–467 are C-helix region; sequence RLMQAMWKCAQ.

It belongs to the MICU1 family. MICU1 subfamily. In terms of assembly, heterodimer; disulfide-linked; heterodimerizes with MICU2 or MICU3. Homodimer; disulfide-linked. Component of the uniplex complex, composed of MCU, EMRE/SMDT1, MICU1 and MICU2 (or MICU3) in a 4:4:1:1 stoichiometry. The composition of calcium sensors within the uniplex complex can differ depending on tissues: a MICU1 homodimer can be present instead of the MICU1-MICU2 heterodimer in skeletal-muscle and kidney. MICU1 is recruited to the uniplex complex by EMRE/SMDT1, and it associates with MCU at low calcium levels, occluding the pore of the MCU channel. Associates with the MICOS complex. Interacts with SLC25A23. Interacts with CHCHD4/MIA40; which introduces the interchain disulfide bond with MICU2. Interacts (when methylated) with UCP2; leading to decrease the calcium sensitivity of MICU1. As to quaternary structure, heterodimer; disulfide-linked; heterodimerizes with MICU2 or MICU3. Heterodimerizes with MICU3 in skeletal muscle. Component of the uniplex complex, composed of MCU, EMRE/SMDT1, MICU1 and MICU2 (or MICU3) in a 4:4:1:1 stoichiometry. Also localizes to mitochondrial cristae junctions. Post-translationally, phosphorylation at Ser-124 by AKT1 impairs its maturation and stability. Asymmetric dimethylation at Arg-457 by PRMT1 decreases the calcium sensitivity of MICU1 by promoting interaction with UCP2. In terms of processing, degraded by YME1L1 when not complexed as homodimer or heterodimer. Not degraded when complexed as homodimer or heterodimer; the presence of the interchain disulfide bond protecting MICU1 from degradation by YME1L1. Expressed in skeletal muscle, heart, kidney, liver, brain, lung, fat and spleen. In terms of tissue distribution, specifically expressed in the skeletal muscle.

It is found in the mitochondrion intermembrane space. Its subcellular location is the mitochondrion inner membrane. Calcium sensor of the mitochondrial calcium uniporter (MCU) channel, which senses calcium level via its EF-hand domains. MICU1 and MICU2 (or MICU3) form a disulfide-linked heterodimer that stimulates and inhibits MCU activity, depending on the concentration of calcium. At low calcium levels, MICU1 occludes the pore of the MCU channel, preventing mitochondrial calcium uptake. At higher calcium levels, calcium-binding to MICU1 and MICU2 (or MICU3) induces a conformational change that weakens MCU-MICU1 interactions and moves the MICU1-MICU2 heterodimer away from the pore, allowing calcium permeation through the MCU channel. Also required to protect against manganese toxicity by preventing manganese uptake by MCU: mechanistically, manganese-binding to its EF-hand domains does not induce any conformational change, maintaining MCU pore occlusion. Acts as a regulator of mitochondrial cristae structure independently of its ability to regulate the mitochondrial calcium uniporter channel. Regulates glucose-dependent insulin secretion in pancreatic beta-cells by regulating mitochondrial calcium uptake. Induces T-helper 1-mediated autoreactivity, which is accompanied by the release of IFNG. Its function is as follows. Isoform that regulates mitochondrial calcium uniporter (MCU) in the skeletal muscle. Compared to other isoforms, this isoform has higher affinity for calcium, promoting mitochondrial calcium uptake at lower calcium concentrations. This allows a rapid response of mitochondrial metabolism and ensures sustained ATP production needed for resistance and strenuous exercise. The sequence is that of Calcium uptake protein 1, mitochondrial from Mus musculus (Mouse).